The following is a 232-amino-acid chain: LexA repressor (232 aa).

The segment at residues 36–56 (IREIGDAAGLQSTSSVAYQLK) is a DNA-binding region (H-T-H motif). Positions 62–86 (GFLRRDPNKPRAVDVRHLPETDNRT) are enriched in basic and acidic residues. Residues 62-107 (GFLRRDPNKPRAVDVRHLPETDNRTKAGPKAKARPTAGASPQPELA) form a disordered region. Active-site for autocatalytic cleavage activity residues include Ser-156 and Lys-193.

Belongs to the peptidase S24 family. As to quaternary structure, homodimer.

It catalyses the reaction Hydrolysis of Ala-|-Gly bond in repressor LexA.. In terms of biological role, represses a number of genes involved in the response to DNA damage (SOS response), including recA and lexA. In the presence of single-stranded DNA, RecA interacts with LexA causing an autocatalytic cleavage which disrupts the DNA-binding part of LexA, leading to derepression of the SOS regulon and eventually DNA repair. The sequence is that of LexA repressor from Corynebacterium efficiens (strain DSM 44549 / YS-314 / AJ 12310 / JCM 11189 / NBRC 100395).